The following is a 4246-amino-acid chain: Intermembrane lipid transfer protein vps13F (4246 aa).

Positions 2–113 (FESIVSNLLT…LLLQKKLKKL (112 aa)) constitute a Chorein N-terminal domain. 16 disordered regions span residues 141–271 (IKEK…EDED), 401–420 (PKKS…PPPK), 591–759 (KAED…SILG), 914–944 (VSSS…EKKL), 964–1014 (KKSK…TNDE), 1217–1251 (QAQQ…IKSP), 1356–1379 (ISTH…DRVD), 1395–1436 (YNGV…KSKK), 1622–1683 (REKR…KSQS), 2101–2131 (LESL…QQQQ), 2211–2237 (HHSK…EKEK), 2471–2513 (QQQH…KSKQ), 2704–2756 (LSTS…QTTK), 3421–3449 (IDDD…TSPL), 3611–3652 (KTLN…NNQN), and 3794–3813 (NNNN…NIDE). The span at 168–201 (NASPVNSNNNNNNNSNLVSESNIPSSSSSSSSSL) shows a compositional bias: low complexity. A compositionally biased stretch (basic and acidic residues) spans 207–217 (NSSKDANKSDD). The segment covering 218-271 (TDMDVDDDDEFQEATEGDYDNEEEQDDHDEEDDLSDDDDDDDDEEDDYEMEDED) has biased composition (acidic residues). Composition is skewed to low complexity over residues 401-413 (PKKS…TTTP) and 597-658 (QQQQ…SNST). A compositionally biased stretch (basic and acidic residues) spans 659 to 668 (DSKDIMKSSG). The span at 669–680 (DKNVNNNNNMGD) shows a compositional bias: low complexity. A compositionally biased stretch (basic and acidic residues) spans 681-702 (NENKDNIDKKEENKNDDQDNKN). Composition is skewed to low complexity over residues 725–747 (SGGW…QQQQ) and 914–924 (VSSSPSPVSSP). 2 stretches are compositionally biased toward basic and acidic residues: residues 925-944 (SRDK…EKKL) and 987-1001 (DKYS…REES). Over residues 1217 to 1241 (QAQQQAQQQQQSQHPSSNDDNSSSN) the composition is skewed to low complexity. Residues 1400-1409 (SDDDNNDDEN) are compositionally biased toward acidic residues. 2 stretches are compositionally biased toward basic and acidic residues: residues 1410–1431 (DKTT…DSLK) and 1622–1634 (REKR…DKDN). A compositionally biased stretch (low complexity) spans 1644-1670 (QQSIPQKQQQQQQQQQQQQQQQQQQQQ). Composition is skewed to low complexity over residues 2471 to 2506 (QQQH…NNNN), 2705 to 2755 (STST…TQTT), 3430 to 3449 (DSGS…TSPL), 3613 to 3652 (LNNN…NNQN), and 3794 to 3809 (NNNN…NDFN).

This sequence belongs to the VPS13 family.

The protein localises to the membrane. Mediates the transfer of lipids between membranes at organelle contact sites. This is Intermembrane lipid transfer protein vps13F (vps13F) from Dictyostelium discoideum (Social amoeba).